The following is an 89-amino-acid chain: Conotoxin Bu5 (89 aa).

The signal sequence occupies residues methionine 1 to alanine 22. Positions glutamate 23–lysine 49 are excised as a propeptide. 3 disulfide bridges follow: cysteine 51–cysteine 66, cysteine 58–cysteine 70, and cysteine 65–cysteine 79. Residue cysteine 79 is modified to Cysteine amide. Positions glycine 80–arginine 89 are excised as a propeptide.

It belongs to the conotoxin O1 superfamily. In terms of tissue distribution, expressed by the venom duct.

It is found in the secreted. The polypeptide is Conotoxin Bu5 (Conus bullatus (Bubble cone)).